A 427-amino-acid chain; its full sequence is Serine--tRNA ligase (427 aa).

L-serine is bound at residue 236–238 (TAE). Residue 267–269 (RRE) coordinates ATP. E290 is an L-serine binding site. 354-357 (EISS) lines the ATP pocket. S390 is an L-serine binding site.

This sequence belongs to the class-II aminoacyl-tRNA synthetase family. Type-1 seryl-tRNA synthetase subfamily. Homodimer. The tRNA molecule binds across the dimer.

The protein resides in the cytoplasm. It carries out the reaction tRNA(Ser) + L-serine + ATP = L-seryl-tRNA(Ser) + AMP + diphosphate + H(+). The catalysed reaction is tRNA(Sec) + L-serine + ATP = L-seryl-tRNA(Sec) + AMP + diphosphate + H(+). It participates in aminoacyl-tRNA biosynthesis; selenocysteinyl-tRNA(Sec) biosynthesis; L-seryl-tRNA(Sec) from L-serine and tRNA(Sec): step 1/1. Functionally, catalyzes the attachment of serine to tRNA(Ser). Is also able to aminoacylate tRNA(Sec) with serine, to form the misacylated tRNA L-seryl-tRNA(Sec), which will be further converted into selenocysteinyl-tRNA(Sec). This is Serine--tRNA ligase from Rippkaea orientalis (strain PCC 8801 / RF-1) (Cyanothece sp. (strain PCC 8801)).